A 432-amino-acid chain; its full sequence is UDP-glucose 6-dehydrogenase (432 aa).

NAD(+) contacts are provided by residues 2 to 19 (NITFIGSGYVGLVSGIIM), V11, D30, K35, T121, and E152. Residues 148–152 (EFLRE), K202, N206, 247–251 (FLNAG), and G255 each bind substrate. C258 (nucleophile) is an active-site residue. Residue K261 participates in NAD(+) binding. K319 lines the substrate pocket. R326 lines the NAD(+) pocket.

Belongs to the UDP-glucose/GDP-mannose dehydrogenase family.

The catalysed reaction is UDP-alpha-D-glucose + 2 NAD(+) + H2O = UDP-alpha-D-glucuronate + 2 NADH + 3 H(+). It participates in nucleotide-sugar biosynthesis; UDP-alpha-D-glucuronate biosynthesis; UDP-alpha-D-glucuronate from UDP-alpha-D-glucose: step 1/1. This chain is UDP-glucose 6-dehydrogenase (udg), found in Rickettsia conorii (strain ATCC VR-613 / Malish 7).